Reading from the N-terminus, the 317-residue chain is Coproporphyrinogen-III oxidase, aerobic 1 (317 aa).

The segment at 38–47 (VLRDGAIFEQ) is important for dimerization. Ser82 serves as a coordination point for substrate. Catalysis depends on His96, which acts as the Proton donor. Substrate is bound by residues 98–100 (NYR) and 269–274 (NGRTES). Residues 251–286 (YVEFNLVYDRGTIFGLQTNGRTESILMSLPPLVRWE) form an important for dimerization region.

This sequence belongs to the aerobic coproporphyrinogen-III oxidase family. Homodimer.

It is found in the cytoplasm. The catalysed reaction is coproporphyrinogen III + O2 + 2 H(+) = protoporphyrinogen IX + 2 CO2 + 2 H2O. The protein operates within porphyrin-containing compound metabolism; protoporphyrin-IX biosynthesis; protoporphyrinogen-IX from coproporphyrinogen-III (O2 route): step 1/1. Functionally, key enzyme in heme biosynthesis. Catalyzes the oxidative decarboxylation of propionic acid side chains of rings A and B of coproporphyrinogen III. This chain is Coproporphyrinogen-III oxidase, aerobic 1, found in Nostoc sp. (strain PCC 7120 / SAG 25.82 / UTEX 2576).